We begin with the raw amino-acid sequence, 631 residues long: 1-deoxy-D-xylulose-5-phosphate synthase (631 aa).

The disordered stretch occupies residues 1–21 (MPTTFHEIPRERPLTPLLDSA). Thiamine diphosphate-binding positions include H87 and 128–130 (GHS). D159 provides a ligand contact to Mg(2+). Residues 160-161 (GA), N188, F295, and E377 each bind thiamine diphosphate. Mg(2+) is bound at residue N188.

It belongs to the transketolase family. DXPS subfamily. As to quaternary structure, homodimer. Mg(2+) serves as cofactor. The cofactor is thiamine diphosphate.

The catalysed reaction is D-glyceraldehyde 3-phosphate + pyruvate + H(+) = 1-deoxy-D-xylulose 5-phosphate + CO2. Its pathway is metabolic intermediate biosynthesis; 1-deoxy-D-xylulose 5-phosphate biosynthesis; 1-deoxy-D-xylulose 5-phosphate from D-glyceraldehyde 3-phosphate and pyruvate: step 1/1. Catalyzes the acyloin condensation reaction between C atoms 2 and 3 of pyruvate and glyceraldehyde 3-phosphate to yield 1-deoxy-D-xylulose-5-phosphate (DXP). The sequence is that of 1-deoxy-D-xylulose-5-phosphate synthase from Ectopseudomonas mendocina (strain ymp) (Pseudomonas mendocina).